Consider the following 198-residue polypeptide: Protein GrpE (198 aa).

This sequence belongs to the GrpE family. As to quaternary structure, homodimer.

The protein resides in the cytoplasm. Functionally, participates actively in the response to hyperosmotic and heat shock by preventing the aggregation of stress-denatured proteins, in association with DnaK and GrpE. It is the nucleotide exchange factor for DnaK and may function as a thermosensor. Unfolded proteins bind initially to DnaJ; upon interaction with the DnaJ-bound protein, DnaK hydrolyzes its bound ATP, resulting in the formation of a stable complex. GrpE releases ADP from DnaK; ATP binding to DnaK triggers the release of the substrate protein, thus completing the reaction cycle. Several rounds of ATP-dependent interactions between DnaJ, DnaK and GrpE are required for fully efficient folding. This chain is Protein GrpE, found in Actinobacillus pleuropneumoniae serotype 5b (strain L20).